Reading from the N-terminus, the 456-residue chain is Equilibrative nucleoside transporter 2 (456 aa).

Over 1–12 (MAHGNAPRDSYH) the chain is Cytoplasmic. Residues 13–29 (LVGISFFILGLGTLLPW) traverse the membrane as a helical segment. Residues 30–68 (NFFITAIPYFQGRLAGTNSSAETPSTNHTSPTDTFNFNN) lie on the Extracellular side of the membrane. Asn-47 and Asn-56 each carry an N-linked (GlcNAc...) asparagine glycan. The helical transmembrane segment at 69–93 (WVTLLSQLPLLLFTLLNSFLYQCIP) threads the bilayer. Topologically, residues 94–97 (ESVR) are cytoplasmic. The helical transmembrane segment at 98-116 (ILGSLLAILLLFALTAALV) threads the bilayer. At 117 to 124 (KVDLSPGL) the chain is on the extracellular side. Residues 125–143 (FFSITMASVWFINSFCAVL) form a helical membrane-spanning segment. The Cytoplasmic portion of the chain corresponds to 144–160 (QGSLFGQLGTMPSTYST). The chain crosses the membrane as a helical span at residues 161–185 (LFLSGQGLAGIFAALAMLTSLASGV). Residues 186–192 (DPQTSAL) are Extracellular-facing. A helical membrane pass occupies residues 193 to 213 (GYFITPCVGILLSIICYLSLP). The Cytoplasmic segment spans residues 214–291 (HLKFARYYLT…VFVVFRKIWL (78 aa)). The residue at position 251 (Ser-251) is a Phosphoserine. Residues 292–311 (TALCLVLVFTVTLSVFPAIT) form a helical membrane-spanning segment. Over 312 to 323 (AMVTTSSNSPGK) the chain is Extracellular. The chain crosses the membrane as a helical span at residues 324 to 342 (WSQFFNPICCFLLFNVMDW). The Cytoplasmic portion of the chain corresponds to 343–359 (LGRSLTSYFLWPDEDSQ). A helical membrane pass occupies residues 360 to 378 (LLPLLVCLRFLFVPLFMLC). The Extracellular portion of the chain corresponds to 379 to 393 (HVPQRARLPIIFWQD). Residues 394-413 (AYFITFMLLFAISNGYFVSL) traverse the membrane as a helical segment. Residues 414–431 (TMCLAPRQVLPHEREVAG) lie on the Cytoplasmic side of the membrane. The chain crosses the membrane as a helical span at residues 432 to 452 (ALMTFFLALGLSCGASLSFLF). Residues 453–456 (KALL) lie on the Extracellular side of the membrane.

Belongs to the SLC29A/ENT transporter (TC 2.A.57) family. In terms of tissue distribution, expressed in squeletal muscles. Expressed in testis at the blood-brain-barrier.

It localises to the apical cell membrane. The protein localises to the basolateral cell membrane. The catalysed reaction is uridine(out) = uridine(in). It catalyses the reaction inosine(in) = inosine(out). The enzyme catalyses adenosine(in) = adenosine(out). It carries out the reaction thymidine(in) = thymidine(out). The catalysed reaction is hypoxanthine(out) = hypoxanthine(in). It catalyses the reaction adenine(out) = adenine(in). The enzyme catalyses cytidine(in) = cytidine(out). It carries out the reaction thymine(out) = thymine(in). The catalysed reaction is uracil(in) = uracil(out). It catalyses the reaction guanine(out) = guanine(in). The enzyme catalyses guanosine(in) = guanosine(out). Its function is as follows. Bidirectional uniporter involved in the facilitative transport of nucleosides and nucleobases, and contributes to maintaining their cellular homeostasis. Functions as a Na(+)-independent, passive transporter. Involved in the transport of nucleosides such as inosine, adenosine, uridine, thymidine, cytidine and guanosine. Also able to transport purine nucleobases (hypoxanthine, adenine, guanine) and pyrimidine nucleobases (thymine, uracil). Involved in nucleoside transport at basolateral membrane of kidney cells, allowing liver absorption of nucleoside metabolites. Mediates apical nucleoside uptake into Sertoli cells, thereby regulating the transport of nucleosides in testis across the blood-testis-barrier. Mediates both the influx and efflux of hypoxanthine in skeletal muscle microvascular endothelial cells to control the amount of intracellular hypoxanthine available for xanthine oxidase-mediated ROS production. The protein is Equilibrative nucleoside transporter 2 of Rattus norvegicus (Rat).